We begin with the raw amino-acid sequence, 404 residues long: uncharacterized protein (404 aa).

12 helical membrane-spanning segments follow: residues 3-23, 43-63, 73-93, 95-115, 135-155, 162-182, 216-236, 248-268, 280-300, 309-329, 346-366, and 377-397; these read IIAK…PITE, TTQI…LTLG, PVVL…IFAP, IETL…GSVI, SLSP…GYII, YTFV…CKIL, IIGA…FIFI, KLAF…GYLI, ILGL…ALIL, IAVI…NLLI, TAGS…TFLV, and FALL…YILI.

Belongs to the major facilitator superfamily. Bcr/CmlA family.

It localises to the cell inner membrane. This is an uncharacterized protein from Rickettsia bellii (strain RML369-C).